The following is a 417-amino-acid chain: S-inosyl-L-homocysteine hydrolase (417 aa).

2 residues coordinate substrate: Asp-124 and Glu-149. NAD(+) is bound at residue 150 to 152 (TTT). Substrate contacts are provided by Lys-179 and Asp-183. Residues Asn-184, 213-218 (GYGWCG), Glu-236, Asn-271, 292-294 (SGH), and Asn-339 each bind NAD(+).

Belongs to the adenosylhomocysteinase family. The cofactor is NAD(+).

Its subcellular location is the cytoplasm. It catalyses the reaction S-inosyl-L-homocysteine + H2O = L-homocysteine + inosine. It participates in amino-acid biosynthesis; S-adenosyl-L-methionine biosynthesis. Functionally, catalyzes the hydrolysis of S-inosyl-L-homocysteine (SIH) to L-homocysteine (Hcy) and inosine. Likely functions in a S-adenosyl-L-methionine (SAM) recycling pathway from S-adenosyl-L-homocysteine (SAH) produced from SAM-dependent methylation reactions. Can also catalyze the reverse reaction in vitro, i.e. the synthesis of SIH from Hcy and inosine. This is S-inosyl-L-homocysteine hydrolase from Methanothermobacter thermautotrophicus (strain ATCC 29096 / DSM 1053 / JCM 10044 / NBRC 100330 / Delta H) (Methanobacterium thermoautotrophicum).